The sequence spans 396 residues: Inositol polyphosphate multikinase (396 aa).

Over residues 1 to 13 (MAAEPPALRLRPP) the composition is skewed to low complexity. The segment at 1-22 (MAAEPPALRLRPPGSTGDSPPV) is disordered. A2 carries the N-acetylalanine modification. A Phosphoserine modification is found at S19. Position 58 (K58) interacts with ATP. Position 65 (R65) interacts with substrate. ATP-binding positions include 114 to 116 (EDV) and D127. Substrate-binding positions include K129, 143-150 (KIQQQVSK), and Q179. The Nuclear localization signal motif lies at 300-310 (RHRKLYAKKHQ). D365 serves as a coordination point for ATP.

Belongs to the inositol phosphokinase (IPK) family. The cofactor is Mg(2+).

The protein resides in the nucleus. It catalyses the reaction 1D-myo-inositol 1,4,5-trisphosphate + 2 ATP = 1D-myo-inositol 1,3,4,5,6-pentakisphosphate + 2 ADP + 2 H(+). The enzyme catalyses 1D-myo-inositol 1,3,4,6-tetrakisphosphate + ATP = 1D-myo-inositol 1,3,4,5,6-pentakisphosphate + ADP + H(+). It carries out the reaction 1-octadecanoyl-2-(5Z,8Z,11Z,14Z)-eicosatetraenoyl-sn-glycero-3-phospho-1D-myo-inositol 4,5-bisphosphate + ATP = 1-octadecanoyl-2-(5Z,8Z,11Z,14Z-eicosatetraenoyl)-sn-glycero-3-phospho-(1D-myo-inositol 3,4,5-triphosphate) + ADP + H(+). The catalysed reaction is a 1,2-diacyl-sn-glycero-3-phospho-(1D-myo-inositol-4,5-bisphosphate) + ATP = a 1,2-diacyl-sn-glycero-3-phospho-(1D-myo-inositol-3,4,5-trisphosphate) + ADP + H(+). It catalyses the reaction 1D-myo-inositol 1,4,5,6-tetrakisphosphate + ATP = 1D-myo-inositol 1,3,4,5,6-pentakisphosphate + ADP + H(+). It functions in the pathway phospholipid metabolism; phosphatidylinositol metabolism. Functionally, inositol phosphate kinase with a broad substrate specificity. Phosphorylates inositol 1,4,5-trisphosphate (Ins(1,4,5)P3) first to inositol 1,3,4,5-tetrakisphosphate and then to inositol 1,3,4,5,6-pentakisphosphate (Ins(1,3,4,5,6)P5). Phosphorylates inositol 1,3,4,6-tetrakisphosphate (Ins(1,3,4,6)P4). Phosphorylates inositol 1,4,5,6-tetrakisphosphate (Ins(1,4,5,6)P4). Phosphorylates glycero-3-phospho-1D-myo-inositol 4,5-bisphosphate to glycero-3-phospho-1D-myo-inositol 3,4,5-trisphosphate. Plays an important role in MLKL-mediated necroptosis via its role in the biosynthesis of inositol pentakisphosphate (InsP5) and inositol hexakisphosphate (InsP6). Binding of these highly phosphorylated inositol phosphates to MLKL mediates the release of an N-terminal auto-inhibitory region, leading to activation of the kinase. Essential for activated phospho-MLKL to oligomerize and localize to the cell membrane during necroptosis. Required for normal embryonic development, probably via its role in the biosynthesis of inositol 1,3,4,5,6-pentakisphosphate (Ins(1,3,4,5,6)P5) and inositol hexakisphosphate (InsP6). The protein is Inositol polyphosphate multikinase (Ipmk) of Mus musculus (Mouse).